Consider the following 207-residue polypeptide: Dephospho-CoA kinase (207 aa).

One can recognise a DPCK domain in the interval 11-207 (RIGLTGGIAS…LLKMSPTAEL (197 aa)). An ATP-binding site is contributed by 19-24 (ASGKSS).

It belongs to the CoaE family.

Its subcellular location is the cytoplasm. The catalysed reaction is 3'-dephospho-CoA + ATP = ADP + CoA + H(+). It participates in cofactor biosynthesis; coenzyme A biosynthesis; CoA from (R)-pantothenate: step 5/5. Functionally, catalyzes the phosphorylation of the 3'-hydroxyl group of dephosphocoenzyme A to form coenzyme A. This is Dephospho-CoA kinase from Synechococcus sp. (strain CC9605).